The chain runs to 493 residues: UDP-N-acetylmuramoyl-L-alanyl-D-glutamate--L-lysine ligase (493 aa).

S30 is a binding site for UDP-N-acetyl-alpha-D-muramoyl-L-alanyl-D-glutamate. 110 to 116 (GTNGKTS) serves as a coordination point for ATP. Residues N151, 152–153 (TT), S179, and R187 each bind UDP-N-acetyl-alpha-D-muramoyl-L-alanyl-D-glutamate. K219 is subject to N6-carboxylysine. The L-lysine recognition motif signature appears at 406–409 (DNPA).

It belongs to the MurCDEF family. MurE subfamily. It depends on Mg(2+) as a cofactor. Post-translationally, carboxylation is probably crucial for Mg(2+) binding and, consequently, for the gamma-phosphate positioning of ATP.

The protein resides in the cytoplasm. It carries out the reaction UDP-N-acetyl-alpha-D-muramoyl-L-alanyl-D-glutamate + L-lysine + ATP = UDP-N-acetyl-alpha-D-muramoyl-L-alanyl-gamma-D-glutamyl-L-lysine + ADP + phosphate + H(+). Its pathway is cell wall biogenesis; peptidoglycan biosynthesis. Functionally, catalyzes the addition of L-lysine to the nucleotide precursor UDP-N-acetylmuramoyl-L-alanyl-D-glutamate (UMAG) in the biosynthesis of bacterial cell-wall peptidoglycan. Cannot use diaminopimelate as substrate. Can accept L-ornithine as substrate, but the efficiency is 400-fold lower than that with L-lysine. Seems to have a role in beta-lactam antibiotic resistance. This is UDP-N-acetylmuramoyl-L-alanyl-D-glutamate--L-lysine ligase from Staphylococcus aureus (strain NCTC 8325 / PS 47).